The chain runs to 1475 residues: Mediator of RNA polymerase II transcription subunit 1.1 (1475 aa).

Disordered stretches follow at residues 579-600 (STIGRTRPQPRPKREPNQLTSM), 645-894 (GLAS…KMRE), and 908-1475 (PDVE…IDDE). The span at 655 to 666 (PVAAAAAAPGGP) shows a compositional bias: low complexity. Polar residues predominate over residues 755–766 (QRSSSEQHNPNP). Residues 767–800 (HQMSQYQMQQYQQNQQFRMHQMQQQQQQQFQMQS) are compositionally biased toward low complexity. Over residues 810–819 (TDEDSDEECD) the composition is skewed to acidic residues. Over residues 829–838 (STSSRMSSVP) the composition is skewed to low complexity. Over residues 869 to 880 (TPSPLSAPPKPF) the composition is skewed to pro residues. Residues 915-929 (QQLSSSSSSSQAEAS) are compositionally biased toward low complexity. Residues 941–952 (PPKPSSSSAPPP) are compositionally biased toward pro residues. Low complexity-rich tracts occupy residues 969 to 989 (QQEQALQKQLQQQESVESELA) and 1037 to 1049 (QKPTDTSSQSTSS). Basic and acidic residues-rich tracts occupy residues 1052–1070 (PPKKEPADEQPEREKEKLI), 1080–1148 (VVDD…EKEP), and 1155–1180 (EKKDEKEKDRREPERKKGKSDGKEYS). Residues 1098-1135 (DRDRDEDREKVRDKEDKAQREKDKKEKERERRRQRDRD) adopt a coiled-coil conformation. A compositionally biased stretch (polar residues) spans 1181-1193 (KASTTSLIPTLSL). The segment covering 1199-1215 (PKKDTVEEEKKDVKEEA) has biased composition (basic and acidic residues). The span at 1242–1252 (APVAPAVQQQQ) shows a compositional bias: low complexity. A compositionally biased stretch (pro residues) spans 1281–1291 (PLQPPPPPQMT). The segment covering 1308-1317 (PGSSRPSGNR) has biased composition (polar residues). Composition is skewed to pro residues over residues 1320–1334 (PLPPPPPMIRGPPPD) and 1425–1440 (PPAPPPPQMIPLPKDP).

Belongs to the Mediator complex subunit 1 family. As to quaternary structure, component of the Mediator complex.

It localises to the nucleus. Its function is as follows. Component of the Mediator complex, a coactivator involved in the regulated transcription of nearly all RNA polymerase II-dependent genes. Mediator functions as a bridge to convey information from gene-specific regulatory proteins to the basal RNA polymerase II transcription machinery. Mediator is recruited to promoters by direct interactions with regulatory proteins and serves as a scaffold for the assembly of a functional preinitiation complex with RNA polymerase II and the general transcription factors. The chain is Mediator of RNA polymerase II transcription subunit 1.1 (sop-3) from Caenorhabditis elegans.